Here is a 485-residue protein sequence, read N- to C-terminus: Glutamate--tRNA ligase (485 aa).

The 'HIGH' region motif lies at 11 to 21; it reads PSPTGLLHIGN. Positions 255-259 match the 'KMSKS' region motif; it reads KLSKR. Lys258 is an ATP binding site.

The protein belongs to the class-I aminoacyl-tRNA synthetase family. Glutamate--tRNA ligase type 1 subfamily. Monomer.

It localises to the cytoplasm. It catalyses the reaction tRNA(Glu) + L-glutamate + ATP = L-glutamyl-tRNA(Glu) + AMP + diphosphate. Its function is as follows. Catalyzes the attachment of glutamate to tRNA(Glu) in a two-step reaction: glutamate is first activated by ATP to form Glu-AMP and then transferred to the acceptor end of tRNA(Glu). The chain is Glutamate--tRNA ligase from Streptococcus gordonii (strain Challis / ATCC 35105 / BCRC 15272 / CH1 / DL1 / V288).